The primary structure comprises 170 residues: Small ribosomal subunit protein mS25 (170 aa).

The protein belongs to the mitochondrion-specific ribosomal protein mS25 family. In terms of assembly, component of the mitochondrial ribosome small subunit (28S) which comprises a 12S rRNA and about 30 distinct proteins.

Its subcellular location is the mitochondrion. The protein is Small ribosomal subunit protein mS25 (mrps-25) of Caenorhabditis elegans.